The sequence spans 549 residues: Eukaryotic translation initiation factor 4B2 (549 aa).

Disordered regions lie at residues 1 to 446 and 465 to 549; these read MSKP…DLIR and FRPR…REGW. Residues 24–46 show a composition bias toward low complexity; the sequence is AEATATAADSQSFPSLKEAATAK. Composition is skewed to gly residues over residues 96–109 and 126–136; these read RLGG…GGRS and SWGGGGGGRRS. A Nuclear localization signal 1 motif is present at residues 169 to 176; that stretch reads GKKSLPSF. Positions 184 to 218 are enriched in gly residues; sequence RYGGGGGSFGGGGGGGAGSYGGGGAGAGSGGGGGF. The short motif at 234–241 is the Nuclear localization signal 2 element; sequence SSTFGSGF. Basic and acidic residues predominate over residues 263–278; it reads QEERRRLVFEPRKADT. Positions 281-292 are enriched in polar residues; the sequence is SETPTAVKTSKP. A compositionally biased stretch (basic and acidic residues) spans 299-323; sequence RPREQVLAEKGLDWKKLDSDIEAKK. A compositionally biased stretch (low complexity) spans 327 to 349; the sequence is SRPSSAQSSRPSSAQSNRSESSA. Basic and acidic residues-rich tracts occupy residues 369–431, 485–507, and 518–549; these read AKPR…KESQ, ERPH…ERPR, and PVDD…REGW.

The protein belongs to the eIF-4 subunit B family. Homodimer. Nonspherical monomer. mRNA-discriminating component of initiation complexes. Post-translationally, phosphorylated.

It localises to the nucleus. Its function is as follows. Promotes the eIF4F and eIF4A RNA-dependent ATP-hydrolysis activity with different efficiency depending on mRNAs, thus providing mRNA discrimination during initiation of translation. This is Eukaryotic translation initiation factor 4B2 from Arabidopsis thaliana (Mouse-ear cress).